The sequence spans 230 residues: 5'-methylthioadenosine/S-adenosylhomocysteine nucleosidase (230 aa).

Catalysis depends on E12, which acts as the Proton acceptor. Substrate contacts are provided by residues G78, V152, and 173 to 174 (ME). Catalysis depends on D197, which acts as the Proton donor.

Belongs to the PNP/UDP phosphorylase family. MtnN subfamily.

The enzyme catalyses S-adenosyl-L-homocysteine + H2O = S-(5-deoxy-D-ribos-5-yl)-L-homocysteine + adenine. It catalyses the reaction S-methyl-5'-thioadenosine + H2O = 5-(methylsulfanyl)-D-ribose + adenine. The catalysed reaction is 5'-deoxyadenosine + H2O = 5-deoxy-D-ribose + adenine. It participates in amino-acid biosynthesis; L-methionine biosynthesis via salvage pathway; S-methyl-5-thio-alpha-D-ribose 1-phosphate from S-methyl-5'-thioadenosine (hydrolase route): step 1/2. Its function is as follows. Catalyzes the irreversible cleavage of the glycosidic bond in both 5'-methylthioadenosine (MTA) and S-adenosylhomocysteine (SAH/AdoHcy) to adenine and the corresponding thioribose, 5'-methylthioribose and S-ribosylhomocysteine, respectively. Also cleaves 5'-deoxyadenosine, a toxic by-product of radical S-adenosylmethionine (SAM) enzymes, into 5-deoxyribose and adenine. This is 5'-methylthioadenosine/S-adenosylhomocysteine nucleosidase from Glaesserella parasuis serovar 5 (strain SH0165) (Haemophilus parasuis).